We begin with the raw amino-acid sequence, 380 residues long: MTTSTRGAHRTPAVLVLEDGRIFRGRAYGAVGATFGEAVFSTGMTGYQETLTDPSYHRQVVVMTAPHVGNTGINDEDMESRRIWVSGYVVRDPARVPSNWRSTRSLDQELAAQGVVGISGIDTRALTRHLRERGAMRVGIFSGNALPDEGTMLAEVRQTPEMSGADLSAEVATTEAYVVPAIGEKKFTVAAVDLGIKGMTPHRMAERGIEVHVLPATATVDDVYAVEPDGVFFSNGPGDPATADHPVSVMQGVLERGTPLFGICFGNQILGRALGFGTFKLKYGHRGINQPVQDRTTGKVEVTAHNHGFAVDAPLDQVSDTPYGRAEVSHVCLNDNVVEGLQLLDRPAFSVQYHPEAAAGPHDAAYLFDRFVNLMEGQRA.

The tract at residues 1-184 (MTTSTRGAHR…EAYVVPAIGE (184 aa)) is CPSase. The L-glutamine site is built by Ser55, Gly236, and Gly238. Residues 188–380 (TVAAVDLGIK…FVNLMEGQRA (193 aa)) form the Glutamine amidotransferase type-1 domain. The active-site Nucleophile is the Cys264. L-glutamine contacts are provided by Phe265, Gln268, Asn306, Gly308, and Phe309. Residues His354 and Glu356 contribute to the active site.

It belongs to the CarA family. In terms of assembly, composed of two chains; the small (or glutamine) chain promotes the hydrolysis of glutamine to ammonia, which is used by the large (or ammonia) chain to synthesize carbamoyl phosphate. Tetramer of heterodimers (alpha,beta)4.

It carries out the reaction hydrogencarbonate + L-glutamine + 2 ATP + H2O = carbamoyl phosphate + L-glutamate + 2 ADP + phosphate + 2 H(+). It catalyses the reaction L-glutamine + H2O = L-glutamate + NH4(+). It functions in the pathway amino-acid biosynthesis; L-arginine biosynthesis; carbamoyl phosphate from bicarbonate: step 1/1. Its pathway is pyrimidine metabolism; UMP biosynthesis via de novo pathway; (S)-dihydroorotate from bicarbonate: step 1/3. Its function is as follows. Small subunit of the glutamine-dependent carbamoyl phosphate synthetase (CPSase). CPSase catalyzes the formation of carbamoyl phosphate from the ammonia moiety of glutamine, carbonate, and phosphate donated by ATP, constituting the first step of 2 biosynthetic pathways, one leading to arginine and/or urea and the other to pyrimidine nucleotides. The small subunit (glutamine amidotransferase) binds and cleaves glutamine to supply the large subunit with the substrate ammonia. The protein is Carbamoyl phosphate synthase small chain of Streptomyces coelicolor (strain ATCC BAA-471 / A3(2) / M145).